The sequence spans 1072 residues: Carbamoyl phosphate synthase large chain (1072 aa).

The carboxyphosphate synthetic domain stretch occupies residues 1–401 (MPKRLDINTI…SLLKAVRSLE (401 aa)). The ATP site is built by Arg-129, Arg-169, Gly-175, Gly-176, Lys-208, Ile-210, Glu-215, Gly-241, Val-242, His-243, Gln-284, and Glu-298. Residues 133-327 (RTLMQELNEP…IAKLAAKIAV (195 aa)) form the ATP-grasp 1 domain. The Mg(2+) site is built by Gln-284, Glu-298, and Asn-300. The Mn(2+) site is built by Gln-284, Glu-298, and Asn-300. The oligomerization domain stretch occupies residues 402–546 (LGIYHLELNH…YSTYGDENES (145 aa)). The carbamoyl phosphate synthetic domain stretch occupies residues 547-929 (IVTERKSVMV…ALYKGLVAAG (383 aa)). The region spanning 671–861 (EAALTELGIP…MANIATKVIL (191 aa)) is the ATP-grasp 2 domain. Positions 707, 746, 752, 777, 778, 779, 780, 820, and 832 each coordinate ATP. Mg(2+) contacts are provided by Gln-820, Glu-832, and Asn-834. Mn(2+) is bound by residues Gln-820, Glu-832, and Asn-834. Residues 930–1072 (ISIPTHGSVI…PTTRHEVVHA (143 aa)) enclose the MGS-like domain. The segment at 930 to 1072 (ISIPTHGSVI…PTTRHEVVHA (143 aa)) is allosteric domain.

The protein belongs to the CarB family. In terms of assembly, composed of two chains; the small (or glutamine) chain promotes the hydrolysis of glutamine to ammonia, which is used by the large (or ammonia) chain to synthesize carbamoyl phosphate. Tetramer of heterodimers (alpha,beta)4. The cofactor is Mg(2+). It depends on Mn(2+) as a cofactor.

The catalysed reaction is hydrogencarbonate + L-glutamine + 2 ATP + H2O = carbamoyl phosphate + L-glutamate + 2 ADP + phosphate + 2 H(+). It carries out the reaction hydrogencarbonate + NH4(+) + 2 ATP = carbamoyl phosphate + 2 ADP + phosphate + 2 H(+). It participates in amino-acid biosynthesis; L-arginine biosynthesis; carbamoyl phosphate from bicarbonate: step 1/1. It functions in the pathway pyrimidine metabolism; UMP biosynthesis via de novo pathway; (S)-dihydroorotate from bicarbonate: step 1/3. Functionally, large subunit of the glutamine-dependent carbamoyl phosphate synthetase (CPSase). CPSase catalyzes the formation of carbamoyl phosphate from the ammonia moiety of glutamine, carbonate, and phosphate donated by ATP, constituting the first step of 2 biosynthetic pathways, one leading to arginine and/or urea and the other to pyrimidine nucleotides. The large subunit (synthetase) binds the substrates ammonia (free or transferred from glutamine from the small subunit), hydrogencarbonate and ATP and carries out an ATP-coupled ligase reaction, activating hydrogencarbonate by forming carboxy phosphate which reacts with ammonia to form carbamoyl phosphate. In Bacillus cytotoxicus (strain DSM 22905 / CIP 110041 / 391-98 / NVH 391-98), this protein is Carbamoyl phosphate synthase large chain.